Here is a 423-residue protein sequence, read N- to C-terminus: Adenylosuccinate synthetase (423 aa).

GTP-binding positions include 12 to 18 (GDEGKGK) and 40 to 42 (GHT). Catalysis depends on Asp13, which acts as the Proton acceptor. Asp13 and Gly40 together coordinate Mg(2+). IMP is bound by residues 13–16 (DEGK), 38–41 (NAGH), Thr129, Arg143, Gln224, Thr239, and Arg303. His41 acts as the Proton donor in catalysis. Residue 299–305 (ATTGRKR) participates in substrate binding. Residues Arg305, 331 to 333 (KGD), and 412 to 414 (SVG) each bind GTP.

Belongs to the adenylosuccinate synthetase family. As to quaternary structure, homodimer. The cofactor is Mg(2+).

The protein resides in the cytoplasm. The catalysed reaction is IMP + L-aspartate + GTP = N(6)-(1,2-dicarboxyethyl)-AMP + GDP + phosphate + 2 H(+). The protein operates within purine metabolism; AMP biosynthesis via de novo pathway; AMP from IMP: step 1/2. Functionally, plays an important role in the de novo pathway of purine nucleotide biosynthesis. Catalyzes the first committed step in the biosynthesis of AMP from IMP. In Christiangramia forsetii (strain DSM 17595 / CGMCC 1.15422 / KT0803) (Gramella forsetii), this protein is Adenylosuccinate synthetase.